The sequence spans 354 residues: Methionine import ATP-binding protein MetN (354 aa).

Positions 8-250 (LDHIDITFRQ…PKEALTQEFI (243 aa)) constitute an ABC transporter domain. 42-49 (GYSGAGKS) lines the ATP pocket.

The protein belongs to the ABC transporter superfamily. Methionine importer (TC 3.A.1.24) family. As to quaternary structure, the complex is composed of two ATP-binding proteins (MetN), two transmembrane proteins (MetI) and a solute-binding protein (MetQ).

It is found in the cell membrane. It carries out the reaction L-methionine(out) + ATP + H2O = L-methionine(in) + ADP + phosphate + H(+). It catalyses the reaction D-methionine(out) + ATP + H2O = D-methionine(in) + ADP + phosphate + H(+). In terms of biological role, part of the ABC transporter complex MetNIQ involved in methionine import. Responsible for energy coupling to the transport system. This is Methionine import ATP-binding protein MetN from Streptococcus pyogenes serotype M2 (strain MGAS10270).